Consider the following 390-residue polypeptide: Putative transposase YncI (390 aa).

The protein belongs to the transposase 11 family.

This chain is Putative transposase YncI (yncI), found in Escherichia coli O157:H7.